The following is an 87-amino-acid chain: Translation initiation factor IF-1 2 (87 aa).

The region spanning 1 to 72 (MAKEELIELN…TKGRINFRHK (72 aa)) is the S1-like domain. Residues 66 to 87 (RINFRHKDERSGPPSRPPQHRR) form a disordered region.

It belongs to the IF-1 family. As to quaternary structure, component of the 30S ribosomal translation pre-initiation complex which assembles on the 30S ribosome in the order IF-2 and IF-3, IF-1 and N-formylmethionyl-tRNA(fMet); mRNA recruitment can occur at any time during PIC assembly.

Its subcellular location is the cytoplasm. One of the essential components for the initiation of protein synthesis. Stabilizes the binding of IF-2 and IF-3 on the 30S subunit to which N-formylmethionyl-tRNA(fMet) subsequently binds. Helps modulate mRNA selection, yielding the 30S pre-initiation complex (PIC). Upon addition of the 50S ribosomal subunit IF-1, IF-2 and IF-3 are released leaving the mature 70S translation initiation complex. This chain is Translation initiation factor IF-1 2, found in Bordetella parapertussis (strain 12822 / ATCC BAA-587 / NCTC 13253).